A 515-amino-acid polypeptide reads, in one-letter code: Maturase K (515 aa).

The protein belongs to the intron maturase 2 family. MatK subfamily.

The protein localises to the plastid. It is found in the chloroplast. Functionally, usually encoded in the trnK tRNA gene intron. Probably assists in splicing its own and other chloroplast group II introns. In Larix laricina (Tamarack), this protein is Maturase K.